Consider the following 283-residue polypeptide: RNase adapter protein RapZ (283 aa).

8-15 (GRSGSGKS) serves as a coordination point for ATP. 56–59 (DVRN) lines the GTP pocket. The interval 266–283 (RARGKNVQSRHRTLEKRK) is RNA-binding.

The protein belongs to the RapZ-like family. RapZ subfamily. In terms of assembly, homotrimer.

Modulates the synthesis of GlmS, by affecting the processing and stability of the regulatory small RNA GlmZ. When glucosamine-6-phosphate (GlcN6P) concentrations are high in the cell, RapZ binds GlmZ and targets it to cleavage by RNase E. Consequently, GlmZ is inactivated and unable to activate GlmS synthesis. Under low GlcN6P concentrations, RapZ is sequestered and inactivated by an other regulatory small RNA, GlmY, preventing GlmZ degradation and leading to synthesis of GlmS. The protein is RNase adapter protein RapZ of Yersinia enterocolitica serotype O:8 / biotype 1B (strain NCTC 13174 / 8081).